A 198-amino-acid chain; its full sequence is FMN-dependent NADH:quinone oxidoreductase (198 aa).

FMN is bound at residue M92 to L95.

Belongs to the azoreductase type 1 family. In terms of assembly, homodimer. Requires FMN as cofactor.

The enzyme catalyses 2 a quinone + NADH + H(+) = 2 a 1,4-benzosemiquinone + NAD(+). It carries out the reaction N,N-dimethyl-1,4-phenylenediamine + anthranilate + 2 NAD(+) = 2-(4-dimethylaminophenyl)diazenylbenzoate + 2 NADH + 2 H(+). Its function is as follows. Quinone reductase that provides resistance to thiol-specific stress caused by electrophilic quinones. Also exhibits azoreductase activity. Catalyzes the reductive cleavage of the azo bond in aromatic azo compounds to the corresponding amines. This chain is FMN-dependent NADH:quinone oxidoreductase, found in Lachnoclostridium phytofermentans (strain ATCC 700394 / DSM 18823 / ISDg) (Clostridium phytofermentans).